The following is a 167-amino-acid chain: NAD(P)H-quinone oxidoreductase subunit J (167 aa).

This sequence belongs to the complex I 30 kDa subunit family. In terms of assembly, NDH-1 can be composed of about 15 different subunits; different subcomplexes with different compositions have been identified which probably have different functions.

The protein resides in the cellular thylakoid membrane. The enzyme catalyses a plastoquinone + NADH + (n+1) H(+)(in) = a plastoquinol + NAD(+) + n H(+)(out). It carries out the reaction a plastoquinone + NADPH + (n+1) H(+)(in) = a plastoquinol + NADP(+) + n H(+)(out). NDH-1 shuttles electrons from an unknown electron donor, via FMN and iron-sulfur (Fe-S) centers, to quinones in the respiratory and/or the photosynthetic chain. The immediate electron acceptor for the enzyme in this species is believed to be plastoquinone. Couples the redox reaction to proton translocation, and thus conserves the redox energy in a proton gradient. Cyanobacterial NDH-1 also plays a role in inorganic carbon-concentration. The polypeptide is NAD(P)H-quinone oxidoreductase subunit J (Microcystis aeruginosa (strain NIES-843 / IAM M-2473)).